Here is a 550-residue protein sequence, read N- to C-terminus: Gag-Pol polyprotein (550 aa).

The N-myristoyl glycine; by host moiety is linked to residue Gly2. An interaction with Gp41 region spans residues 7-31; it reads VLSGGELDRWEKIRLRPGGKKQYRL. An interaction with host CALM1 region spans residues 8–43; it reads LSGGELDRWEKIRLRPGGKKQYRLKHIVWASRKLER. The interval 12-19 is interaction with host AP3D1; that stretch reads ELDRWEKI. The interval 14-33 is interaction with membrane phosphatidylinositol 4,5-bisphosphate and RNA; that stretch reads DRWEKIRLRPGGKKQYRLKH. The Nuclear export signal motif lies at 16–22; the sequence is WEKIRLR. A Nuclear localization signal motif is present at residues 26-32; it reads KKQYRLK. The interaction with membrane phosphatidylinositol 4,5-bisphosphate stretch occupies residues 73 to 77; sequence EELRS. The tract at residues 106–128 is disordered; that stretch reads EEQNKSKKKAQQAAADTGNSSQV. At Tyr132 the chain carries Phosphotyrosine; by host. The interaction with human PPIA/CYPA and NUP153 stretch occupies residues 189–227; the sequence is NTVGGHQAAMQMLKETINEEAAEWDRLHPVHAGPIAPGQ. Residues 277–363 are dimerization/Multimerization of capsid protein p24; the sequence is YSPISILDIR…GGPGHKARVL (87 aa). CCHC-type zinc fingers lie at residues 390-407 and 411-428; these read VKCF…NCKA and KGCW…DCTE. Residues 444 to 464 are disordered; sequence KAREFSSEQTRANSPTRGELQ. Over residues 450–459 the composition is skewed to polar residues; that stretch reads SEQTRANSPT. The segment at 489–493 is dimerization of protease; that stretch reads PQITL. In terms of domain architecture, Peptidase A2 spans 508 to 550; it reads KEALLDTGADDTVLEEINLPGRWKPKMIGGIGGFIKVRQYDEV. Catalysis depends on Asp513, which acts as the For protease activity; shared with dimeric partner. The interval 537–543 is dimerization of protease; it reads GIGGFIK.

In terms of assembly, homotrimer; further assembles as hexamers of trimers. Interacts with gp41 (via C-terminus). Interacts with host CALM1; this interaction induces a conformational change in the Matrix protein, triggering exposure of the myristate group. Interacts with host AP3D1; this interaction allows the polyprotein trafficking to multivesicular bodies during virus assembly. Part of the pre-integration complex (PIC) which is composed of viral genome, matrix protein, Vpr and integrase. As to quaternary structure, homodimer; the homodimer further multimerizes as homohexamers or homopentamers. Interacts with human PPIA/CYPA; This interaction stabilizes the capsid. Interacts with human NUP153. Interacts with host PDZD8; this interaction stabilizes the capsid. Interacts with monkey TRIM5; this interaction destabilizes the capsid. Homodimer, whose active site consists of two apposed aspartic acid residues. Post-translationally, specific enzymatic cleavages by the viral protease yield mature proteins. The protease is released by autocatalytic cleavage. The polyprotein is cleaved during and after budding, this process is termed maturation. Proteolytic cleavage of p66 RT removes the RNase H domain to yield the p51 RT subunit. Nucleocapsid protein p7 might be further cleaved after virus entry. Tyrosine phosphorylated presumably in the virion by a host kinase. Phosphorylation is apparently not a major regulator of membrane association. In terms of processing, phosphorylated possibly by host MAPK1; this phosphorylation is necessary for Pin1-mediated virion uncoating. Post-translationally, methylated by host PRMT6, impairing its function by reducing RNA annealing and the initiation of reverse transcription.

Its subcellular location is the host cell membrane. It localises to the host endosome. The protein resides in the host multivesicular body. It is found in the virion membrane. The protein localises to the host nucleus. Its subcellular location is the host cytoplasm. It localises to the virion. It catalyses the reaction Specific for a P1 residue that is hydrophobic, and P1' variable, but often Pro.. With respect to regulation, the viral protease is inhibited by many synthetic protease inhibitors (PIs), such as amprenavir, atazanavir, indinavir, loprinavir, nelfinavir, ritonavir and saquinavir. Use of protease inhibitors in tritherapy regimens permit more ambitious therapeutic strategies. Mediates, with Gag polyprotein, the essential events in virion assembly, including binding the plasma membrane, making the protein-protein interactions necessary to create spherical particles, recruiting the viral Env proteins, and packaging the genomic RNA via direct interactions with the RNA packaging sequence (Psi). Gag-Pol polyprotein may regulate its own translation, by the binding genomic RNA in the 5'-UTR. At low concentration, the polyprotein would promote translation, whereas at high concentration, the polyprotein would encapsidate genomic RNA and then shut off translation. Functionally, targets the polyprotein to the plasma membrane via a multipartite membrane-binding signal, that includes its myristoylated N-terminus. Matrix protein is part of the pre-integration complex. Implicated in the release from host cell mediated by Vpu. Binds to RNA. In terms of biological role, forms the conical core that encapsulates the genomic RNA-nucleocapsid complex in the virion. Most core are conical, with only 7% tubular. The core is constituted by capsid protein hexamer subunits. The core is disassembled soon after virion entry. Host restriction factors such as TRIM5-alpha or TRIMCyp bind retroviral capsids and cause premature capsid disassembly, leading to blocks in reverse transcription. Capsid restriction by TRIM5 is one of the factors which restricts HIV-1 to the human species. Host PIN1 apparently facilitates the virion uncoating. On the other hand, interactions with PDZD8 or CYPA stabilize the capsid. Its function is as follows. Encapsulates and protects viral dimeric unspliced genomic RNA (gRNA). Binds these RNAs through its zinc fingers. Acts as a nucleic acid chaperone which is involved in rearangement of nucleic acid secondary structure during gRNA retrotranscription. Also facilitates template switch leading to recombination. As part of the polyprotein, participates in gRNA dimerization, packaging, tRNA incorporation and virion assembly. Aspartyl protease that mediates proteolytic cleavages of Gag and Gag-Pol polyproteins during or shortly after the release of the virion from the plasma membrane. Cleavages take place as an ordered, step-wise cascade to yield mature proteins. This process is called maturation. Displays maximal activity during the budding process just prior to particle release from the cell. Also cleaves Nef and Vif, probably concomitantly with viral structural proteins on maturation of virus particles. Hydrolyzes host EIF4GI and PABP1 in order to shut off the capped cellular mRNA translation. The resulting inhibition of cellular protein synthesis serves to ensure maximal viral gene expression and to evade host immune response. Also mediates cleavage of host YTHDF3. Mediates cleavage of host CARD8, thereby activating the CARD8 inflammasome, leading to the clearance of latent HIV-1 in patient CD4(+) T-cells after viral reactivation; in contrast, HIV-1 can evade CARD8-sensing when its protease remains inactive in infected cells prior to viral budding. The chain is Gag-Pol polyprotein (gag-pol) from Human immunodeficiency virus type 1 group M subtype B (isolate CDC-451) (HIV-1).